The chain runs to 240 residues: MORN repeat-containing protein 3 (240 aa).

The segment at 6–35 is interaction with MDM2; sequence CPKKSESLWKGWDRKAQRNGLRSQVYAVNG. MORN repeat units lie at residues 38–60, 62–84, 91–113, 114–136, 137–159, 160–182, and 184–205; these read YVGEWKDNVKHGKGTQVWKKKGA, YEGDWKFGKRDGYGTLSLPDQQT, YSGWWKGDKKSGYGIQFFGPKEY, YEGDWCGSQRSGWGRMYYSNGDI, YEGQWENDKPNGEGMLRLKNGNR, YEGCWERGMKNGAGRFFHLDHGQ, and FEGFWVDNMAKCGTMIDFGRDE. Residues 76–100 form an interaction with SIRT1 region; sequence TLSLPDQQTGKCRRVYSGWWKGDKK. An interaction with TP53 region spans residues 206–240; the sequence is APEPTQFPIPEVKILDPDGVLAEALAMFRKTEEGD.

In terms of assembly, interacts with MEIG1. Interacts with TP53, MDM2 and SIRT1; the interactions mediate post-transcriptional modifications of TP53 by MDM2 and SIRT1.

The protein localises to the cytoplasmic vesicle. The protein resides in the secretory vesicle. It is found in the acrosome. Its function is as follows. Assembles a suppression complex (suppresome) by tethering SIRT1 and MDM2 to regulate composite modifications of p53/TP53. Confers both deacetylation-mediated functional inactivation, by SIRT1, and ubiquitination-dependent degradation, by MDM2, of p53/TP53, promoting a proliferative and cell survival behaviors. May play a role in the regulation of spermatogenesis. This Homo sapiens (Human) protein is MORN repeat-containing protein 3.